Here is a 252-residue protein sequence, read N- to C-terminus: Imidazole glycerol phosphate synthase subunit HisF (252 aa).

Residues Asp-11 and Asp-130 contribute to the active site.

It belongs to the HisA/HisF family. In terms of assembly, heterodimer of HisH and HisF.

The protein resides in the cytoplasm. It carries out the reaction 5-[(5-phospho-1-deoxy-D-ribulos-1-ylimino)methylamino]-1-(5-phospho-beta-D-ribosyl)imidazole-4-carboxamide + L-glutamine = D-erythro-1-(imidazol-4-yl)glycerol 3-phosphate + 5-amino-1-(5-phospho-beta-D-ribosyl)imidazole-4-carboxamide + L-glutamate + H(+). Its pathway is amino-acid biosynthesis; L-histidine biosynthesis; L-histidine from 5-phospho-alpha-D-ribose 1-diphosphate: step 5/9. Functionally, IGPS catalyzes the conversion of PRFAR and glutamine to IGP, AICAR and glutamate. The HisF subunit catalyzes the cyclization activity that produces IGP and AICAR from PRFAR using the ammonia provided by the HisH subunit. In Bacillus cereus (strain AH187), this protein is Imidazole glycerol phosphate synthase subunit HisF.